Consider the following 394-residue polypeptide: Flavohemoprotein (394 aa).

One can recognise a Globin domain in the interval 1–138 (MLTQEHINII…LAQVFIDREG (138 aa)). Residue H85 coordinates heme b. Catalysis depends on charge relay system residues Y95 and E137. The reductase stretch occupies residues 149–394 (GGWRDGRTFV…VFGPHAQLAA (246 aa)). Positions 152–262 (RDGRTFVVRE…YAPAGDFFYV (111 aa)) constitute an FAD-binding FR-type domain. FAD contacts are provided by residues Y190 and 206 to 209 (RQYS). Residue 274–279 (GVGATP) participates in NADP(+) binding. 385-388 (VFGP) lines the FAD pocket.

The protein belongs to the globin family. Two-domain flavohemoproteins subfamily. It in the C-terminal section; belongs to the flavoprotein pyridine nucleotide cytochrome reductase family. The cofactor is heme b. It depends on FAD as a cofactor.

The enzyme catalyses 2 nitric oxide + NADPH + 2 O2 = 2 nitrate + NADP(+) + H(+). It carries out the reaction 2 nitric oxide + NADH + 2 O2 = 2 nitrate + NAD(+) + H(+). Its function is as follows. Is involved in NO detoxification in an aerobic process, termed nitric oxide dioxygenase (NOD) reaction that utilizes O(2) and NAD(P)H to convert NO to nitrate, which protects the bacterium from various noxious nitrogen compounds. Therefore, plays a central role in the inducible response to nitrosative stress. The protein is Flavohemoprotein (hmp) of Vibrio cholerae serotype O1 (strain ATCC 39315 / El Tor Inaba N16961).